Consider the following 147-residue polypeptide: Large ribosomal subunit protein bL9 (147 aa).

Residues 40–60 (TTGNLKQHEAHERKAAEEAKQ) are disordered. The segment covering 45-59 (KQHEAHERKAAEEAK) has biased composition (basic and acidic residues).

The protein belongs to the bacterial ribosomal protein bL9 family.

Functionally, binds to the 23S rRNA. The sequence is that of Large ribosomal subunit protein bL9 from Exiguobacterium sibiricum (strain DSM 17290 / CCUG 55495 / CIP 109462 / JCM 13490 / 255-15).